A 228-amino-acid polypeptide reads, in one-letter code: RNA chaperone ProQ (228 aa).

Residues 105 to 178 (EAKARVQAQR…REEQHTPVSD (74 aa)) are disordered. 2 stretches are compositionally biased toward basic and acidic residues: residues 117–136 (QQAK…DAPR) and 146–173 (RRKE…EEQH).

The protein belongs to the ProQ family.

It is found in the cytoplasm. In terms of biological role, RNA chaperone with significant RNA binding, RNA strand exchange and RNA duplexing activities. May regulate ProP activity through an RNA-based, post-transcriptional mechanism. The sequence is that of RNA chaperone ProQ from Citrobacter koseri (strain ATCC BAA-895 / CDC 4225-83 / SGSC4696).